The chain runs to 141 residues: Lutropin subunit beta (141 aa).

A signal peptide spans 1–22; it reads MERYQELTVLLLLLLLEGGSWG. 6 disulfide bridges follow: C30-C78, C44-C93, C47-C131, C55-C109, C59-C111, and C114-C121. Residue N34 is glycosylated (N-linked (GlcNAc...) asparagine).

Belongs to the glycoprotein hormones subunit beta family. As to quaternary structure, heterodimer of a common alpha chain and a unique beta chain which confers biological specificity to thyrotropin, lutropin, follitropin and gonadotropin.

The protein resides in the secreted. Its function is as follows. Promotes spermatogenesis and ovulation by stimulating the testes and ovaries to synthesize steroids. This Trichosurus vulpecula (Brush-tailed possum) protein is Lutropin subunit beta (LHB).